Here is a 400-residue protein sequence, read N- to C-terminus: CCA-adding enzyme (400 aa).

Residues Gly-28 and Arg-31 each coordinate ATP. Gly-28 and Arg-31 together coordinate CTP. Mg(2+)-binding residues include Asp-41 and Asp-43. Positions 112, 155, 158, 161, and 164 each coordinate ATP. CTP contacts are provided by Arg-112, Asp-155, Arg-158, Arg-161, and Arg-164.

Belongs to the tRNA nucleotidyltransferase/poly(A) polymerase family. Bacterial CCA-adding enzyme type 3 subfamily. Homodimer. Requires Mg(2+) as cofactor.

It catalyses the reaction a tRNA precursor + 2 CTP + ATP = a tRNA with a 3' CCA end + 3 diphosphate. It carries out the reaction a tRNA with a 3' CCA end + 2 CTP + ATP = a tRNA with a 3' CCACCA end + 3 diphosphate. In terms of biological role, catalyzes the addition and repair of the essential 3'-terminal CCA sequence in tRNAs without using a nucleic acid template. Adds these three nucleotides in the order of C, C, and A to the tRNA nucleotide-73, using CTP and ATP as substrates and producing inorganic pyrophosphate. tRNA 3'-terminal CCA addition is required both for tRNA processing and repair. Also involved in tRNA surveillance by mediating tandem CCA addition to generate a CCACCA at the 3' terminus of unstable tRNAs. While stable tRNAs receive only 3'-terminal CCA, unstable tRNAs are marked with CCACCA and rapidly degraded. This Staphylococcus haemolyticus (strain JCSC1435) protein is CCA-adding enzyme.